Reading from the N-terminus, the 858-residue chain is M-phase phosphoprotein 8 (858 aa).

The disordered stretch occupies residues 18 to 55; sequence VPDSIGRSPESEGVGAGDEEKDAATKGTVAVGDSEEDG. S51, S85, S136, and S138 each carry phosphoserine. The 60-residue stretch at 59–118 folds into the Chromo domain; it reads FEVERILDMKCEGGKNLYKVRWKGYTSEDDTWEPEVHLEDCKEVLLEFRKKLAENKAKAV. The tract at residues 80 to 87 is histone H3K9me3 binding; that stretch reads WKGYTSED. Residues 129 to 175 form a disordered region; the sequence is NDIFEADSDSDQQSDTKEDISPRKKKKKIKCKEETSPEDLRKKRTKM. T144 carries the phosphothreonine modification. Residues S149 and S164 each carry the phosphoserine; by CDK1 modification. Positions 159 to 169 are enriched in basic and acidic residues; that stretch reads CKEETSPEDLR. Position 188 is a phosphoserine (S188). Disordered stretches follow at residues 209-234 and 250-300; these read ELKDSKKPKKDEIKETKELKKANKRA and NRKT…DKTA. Phosphoserine is present on residues S267, S271, and S278. Over residues 273–282 the composition is skewed to acidic residues; the sequence is ILEDDSEDFI. The segment covering 283–300 has biased composition (basic and acidic residues); that stretch reads SDNREENQNVRSVRDKTA. S318 bears the Phosphoserine mark. The interval 321–431 is disordered; the sequence is EDAGTRVRRK…YDLDKEEKAR (111 aa). A compositionally biased stretch (basic and acidic residues) spans 335–357; the sequence is RKFEEPKEIKKLESTNAFLERRA. Position 385 is a phosphothreonine; by CDK1 (T385). Phosphoserine occurs at positions 392 and 400. The span at 407-431 shows a compositional bias: basic and acidic residues; the sequence is EKEKKNEPKGKYQKRYDLDKEEKAR. T453 carries the phosphothreonine modification. ANK repeat units follow at residues 598-627, 631-660, 664-693, and 697-726; these read TGMTLVMLAAAGGQDDLLRLLITKGAKVNG, NGTTALIHAAEKNFLTTVAILLEAGAFVNV, NGETALMKACKRGNSDIVRLVIECGADCNI, and HQNSALYFAKQCNNVLVYELLKSHLETLSR.

Homodimer. Interacts (via chromo domain) with histone H3K9me3. Has the highest affinity for H3K9me3, and lesser affinity for H3K9me2 and H3K9me1. Component of the HUSH complex; at least composed of TASOR, PPHLN1 and MPHOSPH8. Interacts with DNMT3, EHMT1 and SETDB1. Interacts with MORC2; the interaction associateS MORC2 with the HUSH complex which recruits MORC2 to heterochromatic loci. Interacts with ZNF638; leading to recruitment of the HUSH complex to unintegrated retroviral DNA. Interacts with TASOR. In terms of processing, phosphorylated in M (mitotic) phase. Phosphorylation by CDK1 promotes dissociation from chromatin. Expressed in the spermatogonia, spermatocytes and granular cells within the cerebellum.

The protein resides in the nucleus. The protein localises to the chromosome. Its function is as follows. Heterochromatin component that specifically recognizes and binds methylated 'Lys-9' of histone H3 (H3K9me) and promotes recruitment of proteins that mediate epigenetic repression. Mediates recruitment of the HUSH complex to H3K9me3 sites: the HUSH complex is recruited to genomic loci rich in H3K9me3 and is required to maintain transcriptional silencing by promoting recruitment of SETDB1, a histone methyltransferase that mediates further deposition of H3K9me3, as well as MORC2. Binds H3K9me and promotes DNA methylation by recruiting DNMT3A to target CpG sites; these can be situated within the coding region of the gene. Mediates down-regulation of CDH1 expression. Also represses L1 retrotransposons in collaboration with MORC2 and, probably, SETDB1, the silencing is dependent of repressive epigenetic modifications, such as H3K9me3 mark. Silencing events often occur within introns of transcriptionally active genes, and lead to the down-regulation of host gene expression. The HUSH complex is also involved in the silencing of unintegrated retroviral DNA by being recruited by ZNF638: some part of the retroviral DNA formed immediately after infection remains unintegrated in the host genome and is transcriptionally repressed. The chain is M-phase phosphoprotein 8 from Mus musculus (Mouse).